A 206-amino-acid polypeptide reads, in one-letter code: Large ribosomal subunit protein uL4 (206 aa).

Residues 49–76 (QSAKTRTEVRGGGIKPWRQKGTGRARQG) form a disordered region.

It belongs to the universal ribosomal protein uL4 family. In terms of assembly, part of the 50S ribosomal subunit.

One of the primary rRNA binding proteins, this protein initially binds near the 5'-end of the 23S rRNA. It is important during the early stages of 50S assembly. It makes multiple contacts with different domains of the 23S rRNA in the assembled 50S subunit and ribosome. In terms of biological role, forms part of the polypeptide exit tunnel. The protein is Large ribosomal subunit protein uL4 of Clostridium botulinum (strain Alaska E43 / Type E3).